A 218-amino-acid polypeptide reads, in one-letter code: UPF0502 protein Mmwyl1_3509 (218 aa).

The protein belongs to the UPF0502 family.

In Marinomonas sp. (strain MWYL1), this protein is UPF0502 protein Mmwyl1_3509.